Here is a 636-residue protein sequence, read N- to C-terminus: Receptor-like kinase LIP1 (636 aa).

A disordered region spans residues 18 to 57; it reads NAPCTTNETNDDNVEHDEFRPPVVATTKRTEEREPAEQQP. A Protein kinase domain is found at 74–352; it reads FRQECLLGEG…SDVMVALSFL (279 aa). ATP is bound by residues 80 to 88 and Lys-103; that span reads LGEGGFGRV. The Proton acceptor role is filled by Asp-201. A phosphoserine mark is found at Ser-205 and Ser-236. Thr-242 carries the post-translational modification Phosphothreonine. Tyr-250 bears the Phosphotyrosine mark. A disordered region spans residues 389–636; that stretch reads FCISRKDVGN…EEEHISSDHD (248 aa). Positions 403 to 434 form a coiled coil; sequence SSDSEDEEEEKEQKAEKEEESTSKKRQEQEET. Over residues 413 to 431 the composition is skewed to basic and acidic residues; the sequence is KEQKAEKEEESTSKKRQEQ. A compositionally biased stretch (acidic residues) spans 432 to 455; the sequence is EETATDSDDESDSNSEKDQEEEQS. Polar residues predominate over residues 480-489; the sequence is TNATAQSLKI. Composition is skewed to basic and acidic residues over residues 522-531 and 554-566; these read DSGRDHDDSS and HETR…DDSP. Over residues 567–576 the composition is skewed to polar residues; that stretch reads RNTSMRINSL. 2 stretches are compositionally biased toward basic and acidic residues: residues 588–603 and 619–636; these read NHQT…KSED and SLHR…SDHD.

It belongs to the protein kinase superfamily. Ser/Thr protein kinase family. In terms of assembly, interacts with PRK6. In terms of processing, palmitoylated. In terms of tissue distribution, expressed in mature pollen and in germinating pollen tubes.

It localises to the cell membrane. It is found in the cytoplasm. Involved in pollen tube guidance into micropyle. Participates in perception of the ovule-secreted peptide signal LURE1. This is Receptor-like kinase LIP1 from Arabidopsis thaliana (Mouse-ear cress).